The primary structure comprises 1073 residues: Guanylyl cyclase C (1073 aa).

The N-terminal stretch at 1–23 (MKTLLLDLALWSLLFQPGWLSFS) is a signal peptide. At 24–430 (SQVSQNCHNG…PNDITGRGPQ (407 aa)) the chain is on the extracellular side. N-linked (GlcNAc...) asparagine glycosylation is found at Asn-32, Asn-75, Asn-79, Asn-195, Asn-284, Asn-307, Asn-345, and Asn-402. The helical transmembrane segment at 431-454 (ILMIAVFTLTGAVVLLLLVALLML) threads the bilayer. At 455-1073 (RKYRKDYELR…NTTDKESTYF (619 aa)) the chain is on the cytoplasmic side. A Protein kinase domain is found at 489–749 (LKIDDDKRRD…KIETTLAKIF (261 aa)). Positions 824-954 (TIYFSDIVGF…DTVNTASRME (131 aa)) constitute a Guanylate cyclase domain.

The protein belongs to the adenylyl cyclase class-4/guanylyl cyclase family. Homotrimer. Interacts via its C-terminal region with NHERF4. Interacts with the lectin chaperone VIP36. Glycosylation at Asn-75 and/or Asn-79 is required for interaction with VIP36 while glycosylation at Asn-345 and Asn-402 modulates ligand-mediated GUCY2C activation.

The protein resides in the cell membrane. Its subcellular location is the endoplasmic reticulum membrane. It catalyses the reaction GTP = 3',5'-cyclic GMP + diphosphate. Its function is as follows. Guanylyl cyclase that catalyzes synthesis of cyclic GMP (cGMP) from GTP. Receptor for the E.coli heat-stable enterotoxin; E.coli enterotoxin markedly stimulates the accumulation of cGMP in mammalian cells expressing GUCY2C. Also activated by the endogenous peptides guanylin and uroguanylin. The polypeptide is Guanylyl cyclase C (Homo sapiens (Human)).